Consider the following 426-residue polypeptide: N-formyl-4-amino-5-aminomethyl-2-methylpyrimidine deformylase (426 aa).

Residues 1–31 adopt a coiled-coil conformation; it reads MDQQIYSLQKKVEEHKEELIQLAKTLISYQT. Zn(2+) is bound at residue His-89. The active site involves Asp-91. Asp-122 is a Zn(2+) binding site. Glu-156 (proton acceptor) is an active-site residue. Zn(2+)-binding residues include Glu-157, Asp-180, and His-394.

This sequence belongs to the peptidase M20A family. It depends on Zn(2+) as a cofactor. Co(2+) is required as a cofactor.

The catalysed reaction is N-formyl-4-amino-5-aminomethyl-2-methylpyrimidine + H2O = 4-amino-5-aminomethyl-2-methylpyrimidine + formate. The protein operates within cofactor biosynthesis; thiamine diphosphate biosynthesis. Its function is as follows. Catalyzes the deformylation of the formylaminopyrimidine N-formyl-4-amino-5-aminomethyl-2-methylpyrimidine (FAMP) to give the corresponding aminopyrimidine. This chain is N-formyl-4-amino-5-aminomethyl-2-methylpyrimidine deformylase, found in Bacillus subtilis (strain 168).